A 211-amino-acid chain; its full sequence is Large ribosomal subunit protein bL25 (211 aa).

The disordered stretch occupies residues 188–211 (APKAAKVSTDDEAAAPAEEAPAAE). Positions 201 to 211 (AAPAEEAPAAE) are enriched in low complexity.

The protein belongs to the bacterial ribosomal protein bL25 family. CTC subfamily. As to quaternary structure, part of the 50S ribosomal subunit; part of the 5S rRNA/L5/L18/L25 subcomplex. Contacts the 5S rRNA. Binds to the 5S rRNA independently of L5 and L18.

Functionally, this is one of the proteins that binds to the 5S RNA in the ribosome where it forms part of the central protuberance. The protein is Large ribosomal subunit protein bL25 of Colwellia psychrerythraea (strain 34H / ATCC BAA-681) (Vibrio psychroerythus).